A 246-amino-acid polypeptide reads, in one-letter code: UDP-N-acetyl-D-mannosaminuronic acid transferase (246 aa).

This sequence belongs to the glycosyltransferase 26 family.

The catalysed reaction is UDP-N-acetyl-alpha-D-mannosaminouronate + N-acetyl-alpha-D-glucosaminyl-di-trans,octa-cis-undecaprenyl diphosphate = beta-D-ManNAcA-(1-&gt;4)-alpha-D-GlcNAc-di-trans,octa-cis-undecaprenyl diphosphate + UDP + H(+). Its pathway is bacterial outer membrane biogenesis; enterobacterial common antigen biosynthesis. Catalyzes the synthesis of Und-PP-GlcNAc-ManNAcA (Lipid II), the second lipid-linked intermediate involved in enterobacterial common antigen (ECA) synthesis. The protein is UDP-N-acetyl-D-mannosaminuronic acid transferase of Escherichia fergusonii (strain ATCC 35469 / DSM 13698 / CCUG 18766 / IAM 14443 / JCM 21226 / LMG 7866 / NBRC 102419 / NCTC 12128 / CDC 0568-73).